The chain runs to 630 residues: 1-deoxy-D-xylulose-5-phosphate synthase (630 aa).

Thiamine diphosphate is bound by residues His72 and 113 to 115 (GHS). A Mg(2+)-binding site is contributed by Asp144. Residues 145 to 146 (GA), Asn173, Tyr284, and Glu367 contribute to the thiamine diphosphate site. A Mg(2+)-binding site is contributed by Asn173.

This sequence belongs to the transketolase family. DXPS subfamily. Homodimer. Requires Mg(2+) as cofactor. The cofactor is thiamine diphosphate.

The catalysed reaction is D-glyceraldehyde 3-phosphate + pyruvate + H(+) = 1-deoxy-D-xylulose 5-phosphate + CO2. It functions in the pathway metabolic intermediate biosynthesis; 1-deoxy-D-xylulose 5-phosphate biosynthesis; 1-deoxy-D-xylulose 5-phosphate from D-glyceraldehyde 3-phosphate and pyruvate: step 1/1. Catalyzes the acyloin condensation reaction between C atoms 2 and 3 of pyruvate and glyceraldehyde 3-phosphate to yield 1-deoxy-D-xylulose-5-phosphate (DXP). This is 1-deoxy-D-xylulose-5-phosphate synthase from Bacillus cereus (strain AH820).